Here is a 477-residue protein sequence, read N- to C-terminus: ATP synthase subunit beta, chloroplastic (477 aa).

An ATP-binding site is contributed by G156–T163.

It belongs to the ATPase alpha/beta chains family. F-type ATPases have 2 components, CF(1) - the catalytic core - and CF(0) - the membrane proton channel. CF(1) has five subunits: alpha(3), beta(3), gamma(1), delta(1), epsilon(1). CF(0) has four main subunits: a(1), b(1), b'(1) and c(9-12).

The protein localises to the plastid. It localises to the chloroplast thylakoid membrane. The catalysed reaction is ATP + H2O + 4 H(+)(in) = ADP + phosphate + 5 H(+)(out). Its function is as follows. Produces ATP from ADP in the presence of a proton gradient across the membrane. The catalytic sites are hosted primarily by the beta subunits. This is ATP synthase subunit beta, chloroplastic from Bigelowiella natans (Pedinomonas minutissima).